The following is a 271-amino-acid chain: Integral membrane protein 2C (271 aa).

Threonine 41 is modified (phosphothreonine). Residues 59-79 (VGGVCYLSMGMVVLLMGLVFA) form a helical; Signal-anchor for type II membrane protein membrane-spanning segment. The 95-residue stretch at 140 to 234 (FGGGDPADII…LCSGKDTYRL (95 aa)) folds into the BRICHOS domain. Cysteines 167 and 226 form a disulfide. N-linked (GlcNAc...) asparagine glycosylation occurs at asparagine 173.

The protein belongs to the ITM2 family. In terms of assembly, interacts with BACE1. Interacts with APP. Interacts with STMN2. In terms of processing, type I membrane-bound, as well as soluble, furin has a pre-eminent role in ITM2C proteolytic processing. PCSK7 and PCSK5 may also be involved although to a lesser extent. The soluble form of PCSK7 is incapable of processing ITM2C. Fails to undergo shedding by ADAM10 and intramembrane cleavage by SPPL2B.

It localises to the lysosome membrane. Its subcellular location is the cell membrane. Its function is as follows. Negative regulator of amyloid-beta peptide production. May inhibit the processing of APP by blocking its access to alpha- and beta-secretase. Binding to the beta-secretase-cleaved APP C-terminal fragment is negligible, suggesting that ITM2C is a poor gamma-secretase cleavage inhibitor. May play a role in TNF-induced cell death and neuronal differentiation. The sequence is that of Integral membrane protein 2C (ITM2C) from Bos taurus (Bovine).